The following is a 308-amino-acid chain: Homoserine kinase (308 aa).

P95–A105 contributes to the ATP binding site.

Belongs to the GHMP kinase family. Homoserine kinase subfamily.

It is found in the cytoplasm. The catalysed reaction is L-homoserine + ATP = O-phospho-L-homoserine + ADP + H(+). Its pathway is amino-acid biosynthesis; L-threonine biosynthesis; L-threonine from L-aspartate: step 4/5. Its function is as follows. Catalyzes the ATP-dependent phosphorylation of L-homoserine to L-homoserine phosphate. This chain is Homoserine kinase, found in Corynebacterium diphtheriae (strain ATCC 700971 / NCTC 13129 / Biotype gravis).